The primary structure comprises 242 residues: Probable transcriptional regulatory protein MHP7448_0474 (242 aa).

It belongs to the TACO1 family.

It is found in the cytoplasm. The protein is Probable transcriptional regulatory protein MHP7448_0474 of Mesomycoplasma hyopneumoniae (strain 7448) (Mycoplasma hyopneumoniae).